A 216-amino-acid polypeptide reads, in one-letter code: Transcriptional regulatory protein RcsB (216 aa).

The region spanning 5 to 124 (NVIIADDHPI…DLPKALAALQ (120 aa)) is the Response regulatory domain. A 4-aspartylphosphate modification is found at D56. Residues 144–209 (GGYGDKRLSP…ALLNYLSSVT (66 aa)) enclose the HTH luxR-type domain. Positions 168 to 187 (VTEIAKKLNRSIKTISSQKK) form a DNA-binding region, H-T-H motif.

Belongs to the RcsB family. Interacts with RcsD and RcsA. In terms of processing, phosphorylated and activated by RcsD.

Component of the Rcs signaling system, which controls transcription of numerous genes. RcsB is the response regulator that binds to regulatory DNA regions. Can function both in an RcsA-dependent or RcsA-independent manner. The polypeptide is Transcriptional regulatory protein RcsB (Escherichia coli O157:H7).